The chain runs to 264 residues: 3-methyl-2-oxobutanoate hydroxymethyltransferase (264 aa).

Mg(2+) is bound by residues D45 and D84. 3-methyl-2-oxobutanoate is bound by residues 45–46 (DS), D84, and K112. E114 contributes to the Mg(2+) binding site. E181 functions as the Proton acceptor in the catalytic mechanism.

This sequence belongs to the PanB family. Homodecamer; pentamer of dimers. Mg(2+) is required as a cofactor.

It localises to the cytoplasm. The catalysed reaction is 3-methyl-2-oxobutanoate + (6R)-5,10-methylene-5,6,7,8-tetrahydrofolate + H2O = 2-dehydropantoate + (6S)-5,6,7,8-tetrahydrofolate. Its pathway is cofactor biosynthesis; (R)-pantothenate biosynthesis; (R)-pantoate from 3-methyl-2-oxobutanoate: step 1/2. Catalyzes the reversible reaction in which hydroxymethyl group from 5,10-methylenetetrahydrofolate is transferred onto alpha-ketoisovalerate to form ketopantoate. This Escherichia coli O127:H6 (strain E2348/69 / EPEC) protein is 3-methyl-2-oxobutanoate hydroxymethyltransferase.